The following is a 299-amino-acid chain: ATP phosphoribosyltransferase (299 aa).

The protein belongs to the ATP phosphoribosyltransferase family. Long subfamily. Mg(2+) serves as cofactor.

Its subcellular location is the cytoplasm. It catalyses the reaction 1-(5-phospho-beta-D-ribosyl)-ATP + diphosphate = 5-phospho-alpha-D-ribose 1-diphosphate + ATP. The protein operates within amino-acid biosynthesis; L-histidine biosynthesis; L-histidine from 5-phospho-alpha-D-ribose 1-diphosphate: step 1/9. Its activity is regulated as follows. Feedback inhibited by histidine. Functionally, catalyzes the condensation of ATP and 5-phosphoribose 1-diphosphate to form N'-(5'-phosphoribosyl)-ATP (PR-ATP). Has a crucial role in the pathway because the rate of histidine biosynthesis seems to be controlled primarily by regulation of HisG enzymatic activity. In Shewanella sediminis (strain HAW-EB3), this protein is ATP phosphoribosyltransferase.